The sequence spans 458 residues: tRNA modification GTPase MnmE (458 aa).

(6S)-5-formyl-5,6,7,8-tetrahydrofolate contacts are provided by Arg-26, Glu-88, and Arg-127. In terms of domain architecture, TrmE-type G spans 224–378; the sequence is GLSTAIIGRP…IEDRINQLFF (155 aa). Asn-234 lines the K(+) pocket. GTP is bound by residues 234 to 239, 253 to 259, and 278 to 281; these read NVGKSS, TDIAGTT, and DTAG. Mg(2+) is bound at residue Ser-238. The K(+) site is built by Thr-253, Ile-255, and Thr-258. Thr-259 lines the Mg(2+) pocket. Position 458 (Lys-458) interacts with (6S)-5-formyl-5,6,7,8-tetrahydrofolate.

It belongs to the TRAFAC class TrmE-Era-EngA-EngB-Septin-like GTPase superfamily. TrmE GTPase family. Homodimer. Heterotetramer of two MnmE and two MnmG subunits. Requires K(+) as cofactor.

It localises to the cytoplasm. Functionally, exhibits a very high intrinsic GTPase hydrolysis rate. Involved in the addition of a carboxymethylaminomethyl (cmnm) group at the wobble position (U34) of certain tRNAs, forming tRNA-cmnm(5)s(2)U34. The protein is tRNA modification GTPase MnmE of Streptococcus pyogenes serotype M28 (strain MGAS6180).